We begin with the raw amino-acid sequence, 123 residues long: Holo-[acyl-carrier-protein] synthase (123 aa).

Positions 8 and 60 each coordinate Mg(2+).

Belongs to the P-Pant transferase superfamily. AcpS family. Mg(2+) is required as a cofactor.

The protein localises to the cytoplasm. The catalysed reaction is apo-[ACP] + CoA = holo-[ACP] + adenosine 3',5'-bisphosphate + H(+). Transfers the 4'-phosphopantetheine moiety from coenzyme A to a Ser of acyl-carrier-protein. The polypeptide is Holo-[acyl-carrier-protein] synthase (Ehrlichia ruminantium (strain Welgevonden)).